We begin with the raw amino-acid sequence, 286 residues long: Phosphate import ATP-binding protein PstB (286 aa).

In terms of domain architecture, ABC transporter spans 40–281 (VVARDFSIYY…PKDSMTEDYI (242 aa)). 72–79 (GPSGCGKS) contributes to the ATP binding site.

This sequence belongs to the ABC transporter superfamily. Phosphate importer (TC 3.A.1.7) family. As to quaternary structure, the complex is composed of two ATP-binding proteins (PstB), two transmembrane proteins (PstC and PstA) and a solute-binding protein (PstS).

Its subcellular location is the cell inner membrane. It catalyses the reaction phosphate(out) + ATP + H2O = ADP + 2 phosphate(in) + H(+). In terms of biological role, part of the ABC transporter complex PstSACB involved in phosphate import. Responsible for energy coupling to the transport system. The sequence is that of Phosphate import ATP-binding protein PstB from Chlorobaculum tepidum (strain ATCC 49652 / DSM 12025 / NBRC 103806 / TLS) (Chlorobium tepidum).